A 500-amino-acid chain; its full sequence is Pyoverdin chromophore biosynthetic protein PvcC (500 aa).

FAD is required as a cofactor.

It functions in the pathway siderophore biosynthesis; pyoverdin biosynthesis. This Pseudomonas aeruginosa (strain ATCC 15692 / DSM 22644 / CIP 104116 / JCM 14847 / LMG 12228 / 1C / PRS 101 / PAO1) protein is Pyoverdin chromophore biosynthetic protein PvcC (pvcC).